A 425-amino-acid polypeptide reads, in one-letter code: tRNA(Ile)-lysidine synthase (425 aa).

Residue Ser37 to Ser42 participates in ATP binding.

The protein belongs to the tRNA(Ile)-lysidine synthase family.

It localises to the cytoplasm. The enzyme catalyses cytidine(34) in tRNA(Ile2) + L-lysine + ATP = lysidine(34) in tRNA(Ile2) + AMP + diphosphate + H(+). In terms of biological role, ligates lysine onto the cytidine present at position 34 of the AUA codon-specific tRNA(Ile) that contains the anticodon CAU, in an ATP-dependent manner. Cytidine is converted to lysidine, thus changing the amino acid specificity of the tRNA from methionine to isoleucine. The protein is tRNA(Ile)-lysidine synthase of Leptospira borgpetersenii serovar Hardjo-bovis (strain JB197).